An 87-amino-acid chain; its full sequence is Large ribosomal subunit protein bL27 (87 aa).

Residues 1-20 (MAHKKAGGSSRNGRDSESKR) form a disordered region.

This sequence belongs to the bacterial ribosomal protein bL27 family.

The polypeptide is Large ribosomal subunit protein bL27 (Thiobacillus denitrificans (strain ATCC 25259 / T1)).